The chain runs to 311 residues: Phosphoribosylaminoimidazole-succinocarboxamide synthase (311 aa).

It belongs to the SAICAR synthetase family.

It carries out the reaction 5-amino-1-(5-phospho-D-ribosyl)imidazole-4-carboxylate + L-aspartate + ATP = (2S)-2-[5-amino-1-(5-phospho-beta-D-ribosyl)imidazole-4-carboxamido]succinate + ADP + phosphate + 2 H(+). It participates in purine metabolism; IMP biosynthesis via de novo pathway; 5-amino-1-(5-phospho-D-ribosyl)imidazole-4-carboxamide from 5-amino-1-(5-phospho-D-ribosyl)imidazole-4-carboxylate: step 1/2. This is Phosphoribosylaminoimidazole-succinocarboxamide synthase from Aromatoleum aromaticum (strain DSM 19018 / LMG 30748 / EbN1) (Azoarcus sp. (strain EbN1)).